Consider the following 458-residue polypeptide: ATP synthase subunit beta (458 aa).

148–155 contacts ATP; that stretch reads GGAGVGKT.

The protein belongs to the ATPase alpha/beta chains family. As to quaternary structure, F-type ATPases have 2 components, CF(1) - the catalytic core - and CF(0) - the membrane proton channel. CF(1) has five subunits: alpha(3), beta(3), gamma(1), delta(1), epsilon(1). CF(0) has three main subunits: a(1), b(2) and c(9-12). The alpha and beta chains form an alternating ring which encloses part of the gamma chain. CF(1) is attached to CF(0) by a central stalk formed by the gamma and epsilon chains, while a peripheral stalk is formed by the delta and b chains.

The protein localises to the cell inner membrane. The enzyme catalyses ATP + H2O + 4 H(+)(in) = ADP + phosphate + 5 H(+)(out). Its function is as follows. Produces ATP from ADP in the presence of a proton gradient across the membrane. The catalytic sites are hosted primarily by the beta subunits. The chain is ATP synthase subunit beta from Laribacter hongkongensis (strain HLHK9).